Here is a 161-residue protein sequence, read N- to C-terminus: Transcription initiation factor TFIID subunit 12 (161 aa).

Residues phenylalanine 15–asparagine 55 are disordered. Lysine 19 participates in a covalent cross-link: Glycyl lysine isopeptide (Lys-Gly) (interchain with G-Cter in SUMO2). Positions proline 26–alanine 36 are enriched in polar residues. Threonine 43 carries the post-translational modification Phosphothreonine. Residue serine 51 is modified to Phosphoserine. Position 59 is a phosphothreonine (threonine 59). The Histone-fold domain maps to threonine 59–methionine 126.

It belongs to the TAF12 family. As to quaternary structure, component of the TFIID basal transcription factor complex, composed of TATA-box-binding protein TBP, and a number of TBP-associated factors (TAFs), including TAF1, TAF2, TAF3, TAF4, TAF5, TAF6, TAF7, TAF8, TAF9, TAF10, TAF11, TAF12 and TAF13. Component of the TATA-binding protein-free TAF complex (TFTC), the PCAF histone acetylase complex and the STAGA transcription coactivator-HAT complex. Component of the PCAF complex, at least composed of TADA2L/ADA2, TADA3L/ADA3, TAF5L/PAF65-beta, SUPT3H, TAF6L, TAF9, TAF10, TAF12 and TRRAP. Component of the STAGA transcription coactivator-HAT complex, at least composed of SUPT3H, GCN5L2, TAF5L, TAF6L, STAF65-gamma/SUPT7L, TADA3L, TAD1L, TAF10, TAF12, TRRAP and TAF9. Interacts with ATF7 (via the transactivation domain); the interaction is prevented by sumoylation of ATF7. In terms of assembly, interacts with TBP; the interaction is direct. Interacts with TAF10; the interaction is direct. Interacts with ATF7, promoting transactivation by ATF7. Does not promote the transactivation of ATF7. As to expression, ubiquitous.

It localises to the nucleus. In terms of biological role, the TFIID basal transcription factor complex plays a major role in the initiation of RNA polymerase II (Pol II)-dependent transcription. TFIID recognizes and binds promoters with or without a TATA box via its subunit TBP, a TATA-box-binding protein, and promotes assembly of the pre-initiation complex (PIC). The TFIID complex consists of TBP and TBP-associated factors (TAFs), including TAF1, TAF2, TAF3, TAF4, TAF5, TAF6, TAF7, TAF8, TAF9, TAF10, TAF11, TAF12 and TAF13. Component of the TATA-binding protein-free TAF complex (TFTC), the PCAF histone acetylase complex and the STAGA transcription coactivator-HAT complex. The sequence is that of Transcription initiation factor TFIID subunit 12 from Homo sapiens (Human).